The following is a 245-amino-acid chain: Small ribosomal subunit protein uS2 (245 aa).

Residues 226-245 (GGGANVGEMENPPVEATADA) are disordered.

The protein belongs to the universal ribosomal protein uS2 family.

In Erythrobacter litoralis (strain HTCC2594), this protein is Small ribosomal subunit protein uS2.